Reading from the N-terminus, the 1043-residue chain is V(D)J recombination-activating protein 1 (1043 aa).

The interval 1-288 (MAASFPPTLG…LAVDFPEHFV (288 aa)) is interaction with importin alpha-1. Positions 40–54 (KTPEEAQKEKKDSFE) are enriched in basic and acidic residues. Residues 40 to 80 (KTPEEAQKEKKDSFEGKPSLEQSPAVLDKADGQKPVPTQPL) are disordered. Residue Lys234 forms a Glycyl lysine isopeptide (Lys-Gly) (interchain with G-Cter in ubiquitin) linkage. Zn(2+) contacts are provided by Cys269, His273, Cys293, Cys296, His298, Cys308, His310, Cys313, Cys316, Cys328, Cys331, Cys358, Cys363, His375, and His379. The RING-type zinc finger occupies 293-332 (CQICEHILADPVETNCKHVFCRVCILRCLKVMGSYCPSCR). The RAG1-type zinc finger occupies 354 to 383 (LMVKCPAKECNEEVSLEKYNHHISSHKESK). Positions 392–459 (GGRPRQHLLS…QADELEAIMQ (68 aa)) form a DNA-binding region, NBD. A divalent metal cation-binding residues include Asp603, Asp711, and Glu965.

Belongs to the RAG1 family. In terms of assembly, homodimer. Component of the RAG complex composed of core components RAG1 and RAG2, and associated component HMGB1 or HMGB2. Interacts with DCAF1, leading to recruitment of the CUL4A-RBX1-DDB1-DCAF1/VPRBP complex to ubiquitinate proteins and limit error-prone repair during V(D)J recombination. Mg(2+) serves as cofactor. Mn(2+) is required as a cofactor. Post-translationally, autoubiquitinated in the presence of CDC34/UBCH3. As to expression, maturing lymphoid cells.

The protein localises to the nucleus. The catalysed reaction is S-ubiquitinyl-[E2 ubiquitin-conjugating enzyme]-L-cysteine + [acceptor protein]-L-lysine = [E2 ubiquitin-conjugating enzyme]-L-cysteine + N(6)-ubiquitinyl-[acceptor protein]-L-lysine.. Its function is as follows. Catalytic component of the RAG complex, a multiprotein complex that mediates the DNA cleavage phase during V(D)J recombination. V(D)J recombination assembles a diverse repertoire of immunoglobulin and T-cell receptor genes in developing B and T-lymphocytes through rearrangement of different V (variable), in some cases D (diversity), and J (joining) gene segments. In the RAG complex, RAG1 mediates the DNA-binding to the conserved recombination signal sequences (RSS) and catalyzes the DNA cleavage activities by introducing a double-strand break between the RSS and the adjacent coding segment. RAG2 is not a catalytic component but is required for all known catalytic activities. DNA cleavage occurs in 2 steps: a first nick is introduced in the top strand immediately upstream of the heptamer, generating a 3'-hydroxyl group that can attack the phosphodiester bond on the opposite strand in a direct transesterification reaction, thereby creating 4 DNA ends: 2 hairpin coding ends and 2 blunt, 5'-phosphorylated ends. The chromatin structure plays an essential role in the V(D)J recombination reactions and the presence of histone H3 trimethylated at 'Lys-4' (H3K4me3) stimulates both the nicking and haipinning steps. The RAG complex also plays a role in pre-B cell allelic exclusion, a process leading to expression of a single immunoglobulin heavy chain allele to enforce clonality and monospecific recognition by the B-cell antigen receptor (BCR) expressed on individual B-lymphocytes. The introduction of DNA breaks by the RAG complex on one immunoglobulin allele induces ATM-dependent repositioning of the other allele to pericentromeric heterochromatin, preventing accessibility to the RAG complex and recombination of the second allele. In addition to its endonuclease activity, RAG1 also acts as an E3 ubiquitin-protein ligase that mediates monoubiquitination of histone H3. Histone H3 monoubiquitination is required for the joining step of V(D)J recombination. Mediates polyubiquitination of KPNA1. In Homo sapiens (Human), this protein is V(D)J recombination-activating protein 1 (RAG1).